We begin with the raw amino-acid sequence, 286 residues long: uncharacterized protein (286 aa).

Positions 1–58 (MLLEGIETLLVLSKEKTMSRTGSQLYISQSAVSKRIANLEKKLGKKLIVPAGRHIKLT) constitute an HTH lysR-type domain. The H-T-H motif DNA-binding region spans 18-37 (MSRTGSQLYISQSAVSKRIA).

The protein belongs to the LysR transcriptional regulatory family.

This is an uncharacterized protein from Vibrio cholerae serotype O1 (strain ATCC 39315 / El Tor Inaba N16961).